Consider the following 98-residue polypeptide: NADH-ubiquinone oxidoreductase chain 4L (98 aa).

3 helical membrane passes run 1-21 (MSMV…GLLM), 29-49 (SLLC…VTIL), and 61-81 (IILL…LVMV).

This sequence belongs to the complex I subunit 4L family. As to quaternary structure, core subunit of respiratory chain NADH dehydrogenase (Complex I) which is composed of 45 different subunits.

The protein resides in the mitochondrion inner membrane. The enzyme catalyses a ubiquinone + NADH + 5 H(+)(in) = a ubiquinol + NAD(+) + 4 H(+)(out). In terms of biological role, core subunit of the mitochondrial membrane respiratory chain NADH dehydrogenase (Complex I) which catalyzes electron transfer from NADH through the respiratory chain, using ubiquinone as an electron acceptor. Part of the enzyme membrane arm which is embedded in the lipid bilayer and involved in proton translocation. The chain is NADH-ubiquinone oxidoreductase chain 4L (MT-ND4L) from Erignathus barbatus (Bearded seal).